Consider the following 59-residue polypeptide: Large ribosomal subunit protein uL30 (59 aa).

The protein belongs to the universal ribosomal protein uL30 family. Part of the 50S ribosomal subunit.

This Rhodococcus jostii (strain RHA1) protein is Large ribosomal subunit protein uL30.